Reading from the N-terminus, the 216-residue chain is Uracil phosphoribosyltransferase (216 aa).

5-phospho-alpha-D-ribose 1-diphosphate contacts are provided by residues Arg-85, Arg-110, and 135-143; that span reads DPMVATGYS. Residues Ile-200 and 205–207 contribute to the uracil site; that span reads GDA. Asp-206 is a binding site for 5-phospho-alpha-D-ribose 1-diphosphate.

This sequence belongs to the UPRTase family. Mg(2+) serves as cofactor.

The catalysed reaction is UMP + diphosphate = 5-phospho-alpha-D-ribose 1-diphosphate + uracil. It participates in pyrimidine metabolism; UMP biosynthesis via salvage pathway; UMP from uracil: step 1/1. Allosterically activated by GTP. Functionally, catalyzes the conversion of uracil and 5-phospho-alpha-D-ribose 1-diphosphate (PRPP) to UMP and diphosphate. The chain is Uracil phosphoribosyltransferase from Burkholderia pseudomallei (strain 668).